The sequence spans 213 residues: Kynurenine formamidase (213 aa).

Trp18 provides a ligand contact to substrate. Zn(2+) is bound by residues His48, His52, and Asp54. Catalysis depends on His58, which acts as the Proton donor/acceptor. Zn(2+) is bound by residues His160 and Glu172.

The protein belongs to the Cyclase 1 superfamily. KynB family. As to quaternary structure, homodimer. Zn(2+) serves as cofactor.

It catalyses the reaction N-formyl-L-kynurenine + H2O = L-kynurenine + formate + H(+). The protein operates within amino-acid degradation; L-tryptophan degradation via kynurenine pathway; L-kynurenine from L-tryptophan: step 2/2. Catalyzes the hydrolysis of N-formyl-L-kynurenine to L-kynurenine, the second step in the kynurenine pathway of tryptophan degradation. The chain is Kynurenine formamidase from Burkholderia vietnamiensis (strain G4 / LMG 22486) (Burkholderia cepacia (strain R1808)).